Reading from the N-terminus, the 811-residue chain is Receptor-like protein 46 (811 aa).

The signal sequence occupies residues 1–21 (MSKQCLLSCFLFFCFFIPQLS). Topologically, residues 22 to 782 (FSCPQDQRQS…EEEDKEEEET (761 aa)) are extracellular. 4 N-linked (GlcNAc...) asparagine glycosylation sites follow: N46, N71, N128, and N143. LRR repeat units lie at residues 104–128 (INSLVGLDVSFNNIQGEIPGYAFVN), 129–153 (LTSLISLDMCCNRFNGSIPHELFSL), 155–177 (NLQRLDLSRNVIGGTLSGDIKEL), 178–201 (KNLQELILDENLIGGAIPSEIGSL), 203–225 (ELLTLTLRQNMFNSSIPSSVSRL), 226–249 (TKLKTIDLQNNFLSSKIPDDIGNL), 251–273 (NLSTLSLSMNKLSGGIPSSIHNL), 275–298 (NLETLQLENNNGLSGEIPAAWLFG), 299–322 (LQKLKVLRLEGNNKLQWNNNGYVF), 324–348 (QFKLTHLSLRSCGLEGNIPDWLKNQ), 349–369 (TALVYLDLSINRLEGRFPKWL), 370–395 (ADLKIRNITLSDNRLTGSLPPNLFQR), 397–419 (SLYYLVLSRNNFSGQIPDTIGES), 421–442 (VMVLMLSENNFSGSVPKSITKI), 443–466 (PFLKLLDLSKNRLSGEFPRFRPES), 468–488 (LEWLDISSNEFSGDVPAYFGG), 490–510 (TSMLLMSQNNFSGEFPQNFRN), 511–534 (LSYLIRLDLHDNKISGTVASLISQ), 536–560 (SSSVEVLSLRNNSLKGSIPEGISNL), 561–583 (TSLKVLDLSENNLDGYLPSSLGN), 643–665 (LYTLLDLSKNKLHGEIPTSLGNL), 666–688 (KSLKVLNLSNNEFSGLIPQSFGD), 690–713 (EKVESLDLSHNNLTGEIPKTLSKL), and 714–738 (SELNTLDLRNNKLKGRIPESPQLDR). N215 is a glycosylation site (N-linked (GlcNAc...) asparagine). N251 carries an N-linked (GlcNAc...) asparagine glycan. An N-linked (GlcNAc...) asparagine glycan is attached at N347. N376, N407, and N430 each carry an N-linked (GlcNAc...) asparagine glycan. N499 and N510 each carry an N-linked (GlcNAc...) asparagine glycan. N-linked (GlcNAc...) asparagine glycosylation is found at N546, N559, and N583. N672 and N701 each carry an N-linked (GlcNAc...) asparagine glycan. Residue N747 is glycosylated (N-linked (GlcNAc...) asparagine). A helical transmembrane segment spans residues 783–803 (IFSWNAAAIGCSCGFLIAVVF). The Cytoplasmic portion of the chain corresponds to 804 to 811 (MSYNELWK).

The protein belongs to the RLP family.

It is found in the cell membrane. This Arabidopsis thaliana (Mouse-ear cress) protein is Receptor-like protein 46.